The sequence spans 547 residues: Leiomodin-2 (547 aa).

Residues 1-47 (MSTFGYRRGLSKYESIDEDELLASLSAEELKELERELEDIEPDRNLP) are interaction with tropomyosin alpha. Interaction with actin stretches follow at residues 1–161 (MSTF…SDNS), 162–497 (KPKI…KEIK), and 521–540 (AHEN…LKRV). Residues serine 11, serine 15, and serine 24 each carry the phosphoserine modification. Residues 16-41 (IDEDELLASLSAEELKELERELEDIE) adopt a coiled-coil conformation. 2 disordered regions span residues 91–162 (KVAE…DNSK) and 352–533 (MDKQ…RGSS). 2 stretches are compositionally biased toward acidic residues: residues 95 to 104 (DKEESEEELI) and 112 to 139 (VSEE…EEER). Residues 113 to 148 (SEEVYTEEEEEESQEEEEEEDSDEEERTIETAKGIN) are a coiled coil. Positions 149–160 (GTVNYDSVNSDN) are enriched in polar residues. The span at 352–367 (MDKQRQKRLQEQKQQE) shows a compositional bias: basic and acidic residues. Serine 400 carries the post-translational modification Phosphoserine. Over residues 419–449 (ATPPPPPPPPPPPPPSSQRLPPPPPPPPPPL) the composition is skewed to pro residues. Polar residues predominate over residues 465-475 (QQESAQRALQN). Basic residues predominate over residues 477–487 (QKKKKGKKVKK). Residues 494-512 (KEIKNSLRSVQEKKMEDSS) are compositionally biased toward basic and acidic residues. The WH2 domain occupies 521 to 540 (AHENLMEAIRGSSIKQLKRV).

It belongs to the tropomodulin family. Can bind at least three actin monomers and thereby provides a nucleus for actin filament formation. Interacts (via N-terminus) with tropomyosin alpha (TPM1) (via N-terminus). May also interact with TPM2 (via N-terminus). Interacts with FLII. Specifically expressed in heart and skeletal muscles, with higher levels in heart (at protein level). Not expressed in other tissues.

Its subcellular location is the cytoplasm. It localises to the myofibril. It is found in the sarcomere. The protein localises to the m line. The protein resides in the cytoskeleton. Its function is as follows. Mediates nucleation of actin filaments and thereby promotes actin polymerization. Plays a role in the regulation of actin filament length. Required for normal sarcomere organization in the heart, and for normal heart function. The polypeptide is Leiomodin-2 (LMOD2) (Homo sapiens (Human)).